The primary structure comprises 265 residues: Small ribosomal subunit protein uS3 (265 aa).

In terms of domain architecture, KH type-2 spans 39–111 (IREFLNENFS…EVILNIIEVR (73 aa)). The disordered stretch occupies residues 224 to 250 (FEAGNQRRGQKRRPRNDQPVKDLNKEK). The segment covering 238 to 250 (RNDQPVKDLNKEK) has biased composition (basic and acidic residues).

The protein belongs to the universal ribosomal protein uS3 family. In terms of assembly, part of the 30S ribosomal subunit. Forms a tight complex with proteins S10 and S14.

Binds the lower part of the 30S subunit head. Binds mRNA in the 70S ribosome, positioning it for translation. The chain is Small ribosomal subunit protein uS3 from Acholeplasma laidlawii.